The following is a 438-amino-acid chain: Serine hydroxymethyltransferase (438 aa).

Residue 133 to 135 (GHI) participates in (6S)-5,6,7,8-tetrahydrofolate binding. An N6-(pyridoxal phosphate)lysine modification is found at K239.

It belongs to the SHMT family. Homodimer. It depends on pyridoxal 5'-phosphate as a cofactor.

It localises to the cytoplasm. It carries out the reaction 5,10-methylenetetrahydromethanopterin + glycine + H2O = 5,6,7,8-tetrahydromethanopterin + L-serine. It functions in the pathway amino-acid biosynthesis; glycine biosynthesis; glycine from L-serine: step 1/1. Its function is as follows. Catalyzes the reversible interconversion of serine and glycine with tetrahydromethanopterin (H4MPT) serving as the one-carbon carrier. Also exhibits a pteridine-independent aldolase activity toward beta-hydroxyamino acids, producing glycine and aldehydes, via a retro-aldol mechanism. The sequence is that of Serine hydroxymethyltransferase from Archaeoglobus fulgidus (strain ATCC 49558 / DSM 4304 / JCM 9628 / NBRC 100126 / VC-16).